The sequence spans 378 residues: Ribosomal RNA large subunit methyltransferase G (378 aa).

This sequence belongs to the methyltransferase superfamily. RlmG family.

It is found in the cytoplasm. It carries out the reaction guanosine(1835) in 23S rRNA + S-adenosyl-L-methionine = N(2)-methylguanosine(1835) in 23S rRNA + S-adenosyl-L-homocysteine + H(+). In terms of biological role, specifically methylates the guanine in position 1835 (m2G1835) of 23S rRNA. The sequence is that of Ribosomal RNA large subunit methyltransferase G from Shewanella putrefaciens (strain CN-32 / ATCC BAA-453).